We begin with the raw amino-acid sequence, 310 residues long: Olfactory receptor 4K14 (310 aa).

Topologically, residues 1–25 (MDPQNYSLVSEFVLHGLCTSRHLQN) are extracellular. Asn5 carries an N-linked (GlcNAc...) asparagine glycan. Residues 26–49 (FFFIFFFGVYVAIMLGNLLILVTV) form a helical membrane-spanning segment. The Cytoplasmic segment spans residues 50-58 (ISDPCLHSS). Residues 59–80 (PMYFLLGNLAFLDMWLASFATP) form a helical membrane-spanning segment. Residues 81–101 (KMIRDFLSDQKLISFGGCMAQ) are Extracellular-facing. A disulfide bridge links Cys98 with Cys190. A helical transmembrane segment spans residues 102 to 121 (IFFLHFTGGAEMVLLVSMAY). Residues 122–140 (DRYVAICKPLHYMTLMSWQ) are Cytoplasmic-facing. The chain crosses the membrane as a helical span at residues 141–159 (TCIRLVLASWVVGFVHSIS). At 160–196 (QVAFTVNLPYCGPNEVDSFFCDLPLVIKLACMDTYVL) the chain is on the extracellular side. A helical transmembrane segment spans residues 197-220 (GIIMISDSGLLSLSCFLLLLISYT). The Cytoplasmic portion of the chain corresponds to 221 to 236 (VILLAIRQRAAGSTSK). A helical membrane pass occupies residues 237-259 (ALSTCSAHIMVVTLFFGPCIFVY). The Extracellular segment spans residues 260–270 (VRPFSRFSVDK). Residues 271–290 (LLSVFYTIFTPLLNPIIYTL) form a helical membrane-spanning segment. The Cytoplasmic segment spans residues 291 to 310 (RNEEMKAAMKKLQNRRVTFQ).

This sequence belongs to the G-protein coupled receptor 1 family.

It is found in the cell membrane. Functionally, odorant receptor. The sequence is that of Olfactory receptor 4K14 (OR4K14) from Homo sapiens (Human).